The primary structure comprises 86 residues: MKTLLLTLVVVTIVCLALGYTLTCLICPEKYCNKVHTCLNGEKICFKKYDQRKLLGKRYIRGCADTCPVRKPREIVECCSTDKCNH.

Positions 1–21 are cleaved as a signal peptide; that stretch reads MKTLLLTLVVVTIVCLALGYT. 5 cysteine pairs are disulfide-bonded: C24/C45, C27/C32, C38/C63, C67/C78, and C79/C84.

This sequence belongs to the three-finger toxin family. Ancestral subfamily. Orphan group II sub-subfamily. In terms of tissue distribution, expressed by the venom gland.

Its subcellular location is the secreted. Its function is as follows. Binds with low affinity and weakly inhibits muscle nicotinic acetylcholine receptor (nAChR). The chain is Long neurotoxin homolog from Naja atra (Chinese cobra).